The chain runs to 643 residues: Asparagine synthetase domain-containing protein 1 (643 aa).

C2 (for GATase activity) is an active-site residue. The Glutamine amidotransferase type-2 domain maps to C2 to K184. One can recognise an Asparagine synthetase domain in the interval Q285–K601.

This is Asparagine synthetase domain-containing protein 1 (ASNSD1) from Homo sapiens (Human).